We begin with the raw amino-acid sequence, 85 residues long: Keratin-associated protein 7-1 (85 aa).

The 12 X 2 AA repeats of G-[YCGS] stretch occupies residues 37–82; the sequence is GSPLGYGCNGYSSLGYGFGGSSFSNLGCGYGGSFYRPWGSGSGFGY.

The protein belongs to the KRTAP type 7 family. Interacts with wool keratins. Wool.

In terms of biological role, in the wool cortex, wool keratin intermediate filaments are embedded in an interfilamentous matrix, consisting of hair keratin-associated proteins (KRTAP), which are essential for the formation of a rigid and resistant wool shaft through their extensive disulfide bond cross-linking with abundant cysteine residues of wool keratins. The matrix proteins include the high-sulfur and high-glycine-tyrosine keratins. The protein is Keratin-associated protein 7-1 (KRTAP7-1) of Ovis aries (Sheep).